The sequence spans 563 residues: Calmodulin-binding protein 60 G (563 aa).

A calmodulin-binding region spans residues 1–76; the sequence is MKIRNSPSFH…SSCVSMERSR (76 aa). Residues 147–263 are DNA-binding; the sequence is ESWTVEGFNR…VSATRLAERK (117 aa).

This sequence belongs to the plant ACBP60 protein family. Interacts with calmodulin (CaM) in the presence of calcium ions; this interaction is required for defense responses. As to quaternary structure, (Microbial infection) Interacts with V.dahliae SCP41; the interaction is direct and inhibits CBP60G. As to expression, expressed in seedlings, roots, leaves, inflorescences and flowers, and, to a lower extent, in siliques. Particularly present in guard cells.

Its subcellular location is the nucleus. In terms of biological role, transcription activator that binds DNA in a sequence-specific manner, 5'-GAAATTTTGG-3', to promote the expression of target genes. Recruited to the promoter of ICS1 and other defense-related genes (e.g. PR1, PR2 and EDS5) in response to both biotic (e.g. Pseudomonas syringae pv. maculicola ES4326, P.syringae pv. tomato DC3000, and microbe-associated molecular patterns (MAMPs) such as flg22) and abiotic stresses (e.g. UV-B, drought and abscisic acid), thus triggering rapid defense responses by stimulating salicylic acid (SA) biosynthesis. Involved in basal and systemic acquired resistance to P.syringae and Hyaloperonospora arabidopsidis. Mediates resistance to drought and sensitivity to abscisic acid (ABA), especially for ABA-mediated signaling process that regulates early seedling growth. The sequence is that of Calmodulin-binding protein 60 G from Arabidopsis thaliana (Mouse-ear cress).